We begin with the raw amino-acid sequence, 153 residues long: UPF0235 protein C15orf40 (153 aa).

Basic residues predominate over residues 1 to 12; sequence MLRLRSGLRHLR. A disordered region spans residues 1 to 55; it reads MLRLRSGLRHLRATPNTRGSARLLCAEMPKKAGATTKGKSQSKEPERPLPPLGPV. Ser116 carries the post-translational modification Phosphoserine.

Belongs to the UPF0235 family.

The sequence is that of UPF0235 protein C15orf40 (C15orf40) from Homo sapiens (Human).